A 488-amino-acid chain; its full sequence is Ribulose bisphosphate carboxylase large chain 2 (488 aa).

Asparagine 128 and threonine 178 together coordinate substrate. Lysine 180 serves as the catalytic Proton acceptor. Residue lysine 182 participates in substrate binding. Mg(2+)-binding residues include lysine 206, aspartate 208, and glutamate 209. N6-carboxylysine is present on lysine 206. Histidine 298 serves as the catalytic Proton acceptor. The substrate site is built by arginine 299, histidine 331, and serine 383.

This sequence belongs to the RuBisCO large chain family. Type I subfamily. Heterohexadecamer of 8 large chains and 8 small chains. The cofactor is Mg(2+).

It carries out the reaction 2 (2R)-3-phosphoglycerate + 2 H(+) = D-ribulose 1,5-bisphosphate + CO2 + H2O. The catalysed reaction is D-ribulose 1,5-bisphosphate + O2 = 2-phosphoglycolate + (2R)-3-phosphoglycerate + 2 H(+). In terms of biological role, ruBisCO catalyzes two reactions: the carboxylation of D-ribulose 1,5-bisphosphate, the primary event in carbon dioxide fixation, as well as the oxidative fragmentation of the pentose substrate. Both reactions occur simultaneously and in competition at the same active site. The chain is Ribulose bisphosphate carboxylase large chain 2 from Nitrobacter hamburgensis (strain DSM 10229 / NCIMB 13809 / X14).